The primary structure comprises 123 residues: MRIALNLAAYFPVLMFLLVGTGLGVALVSIGKILGPNRPDTEKNAPYECGFEAFEDARMKFDVRYYLVAILFIIFDLETAFLFPWGVALRDIGWPGFISMMIFLLEFLLGFAYIWKKGGLDWE.

3 consecutive transmembrane segments (helical) span residues 11–31 (FPVLMFLLVGTGLGVALVSIG), 67–87 (LVAILFIIFDLETAFLFPWGV), and 92–112 (IGWPGFISMMIFLLEFLLGFA).

Belongs to the complex I subunit 3 family. NDH-1 is composed of 14 different subunits. Subunits NuoA, H, J, K, L, M, N constitute the membrane sector of the complex.

It is found in the cell inner membrane. It catalyses the reaction a quinone + NADH + 5 H(+)(in) = a quinol + NAD(+) + 4 H(+)(out). Functionally, NDH-1 shuttles electrons from NADH, via FMN and iron-sulfur (Fe-S) centers, to quinones in the respiratory chain. The immediate electron acceptor for the enzyme in this species is believed to be ubiquinone. Couples the redox reaction to proton translocation (for every two electrons transferred, four hydrogen ions are translocated across the cytoplasmic membrane), and thus conserves the redox energy in a proton gradient. The polypeptide is NADH-quinone oxidoreductase subunit A (Paraburkholderia phymatum (strain DSM 17167 / CIP 108236 / LMG 21445 / STM815) (Burkholderia phymatum)).